Here is a 784-residue protein sequence, read N- to C-terminus: Cation/H(+) antiporter 26 (784 aa).

Helical transmembrane passes span 38 to 58 (PLLLLLISLVSSLSSVFQALL), 61 to 81 (LANVDFVTQILAGIFLGPSAL), 97 to 117 (YFIIESFEAISFMFISYISTA), 130 to 150 (LAIINGLSLFLFPYVVGAIAC), 201 to 221 (LALSSIMVANCFGWGFFLLLI), 240 to 260 (FTKVLLLVGIVVVCRPIFNWI), 286 to 306 (TFLSETVGFPYVVGSVALGLV), 321 to 341 (IGSFCYAVLMPCYVIGIGNKV), 351 to 371 (IISLEFLIFTISAAKFASIVL), 376 to 396 (FQVPISHAVIVGFIVCIQGIY), and 413 to 433 (EAFGIMVISAMVHSTIFTAIV).

This sequence belongs to the monovalent cation:proton antiporter 2 (CPA2) transporter (TC 2.A.37) family. CHX (TC 2.A.37.4) subfamily. Expressed in pollen.

It is found in the membrane. May operate as a cation/H(+) antiporter. In Arabidopsis thaliana (Mouse-ear cress), this protein is Cation/H(+) antiporter 26 (CHX26).